Reading from the N-terminus, the 498-residue chain is Glutamate--tRNA ligase (498 aa).

The short motif at 12–22 is the 'HIGH' region element; that stretch reads PSPTGHLHIGN. Positions 259–263 match the 'KMSKS' region motif; it reads KLSKR. K262 is a binding site for ATP.

It belongs to the class-I aminoacyl-tRNA synthetase family. Glutamate--tRNA ligase type 1 subfamily. In terms of assembly, monomer.

It localises to the cytoplasm. It catalyses the reaction tRNA(Glu) + L-glutamate + ATP = L-glutamyl-tRNA(Glu) + AMP + diphosphate. Functionally, catalyzes the attachment of glutamate to tRNA(Glu) in a two-step reaction: glutamate is first activated by ATP to form Glu-AMP and then transferred to the acceptor end of tRNA(Glu). In Limosilactobacillus fermentum (strain NBRC 3956 / LMG 18251) (Lactobacillus fermentum), this protein is Glutamate--tRNA ligase.